Here is a 956-residue protein sequence, read N- to C-terminus: MPDSVRAETGESVAKARVHELAKELGITSKDAVAKLQELGEFVRSASSTIEAPVVKKLRDAFPDAVAAPEAAAPKAPARPAPKAPAKPAEAQASVKPVETQAPATPAAAKAAATPVAPAAPAVKEQKEGSAARPGAGGPRPGNNPFATSQGMPRAGARAEGERPAAAPASGAGRPRPGGPRPGAPRPGNNPFASSQGMPRSGGRGDGERSGGPRPAAGSGGPRPAAGSGGPRPAAGSGGPRPGAGSGASRPGGGGGNRPTPGMMPNRTERPAPAGRGAGGGAGGPGRGGGARPGGGAPAGGGFGKGGRGRGGTQGAFGKGGAGRGKQRKSKRAKRQELEQMSAPSLGGVSVPRGDGNTVVRLRRGSSITDFADKIEANPAALVTVLFHLGEMATATQSLDEETFALLGEELGYKLQVVSPEDEERELLSTFDIDFDAELEAEGDEDLQARPPVVTVMGHVDHGKTRLLDAIRNSDVVAGEHGGITQHIGAYQVNHVHEGEVRKITFIDTPGHEAFTAMRARGAKVTDIAILVVAADDGVMPQTVEALNHAQAAGVPIVVAVNKIDKEGANPEKIRGQLTEYGLVPEEYGGETMFVDVSARQNQNIDALLEAVMLTADAALDLRANPNKDARGIAIEANLDKGRGSVATVLVQSGTLAVGDTIVAGTAHGRVRAMFDDDGTAVTEAGPSRPVQVLGLSSVPRAGDTFFVTGDERTARQIAEKREAADRNAALAKRRKRISLEDFDQAVADGKVDTLNLILKGDVSGAVEALEDSLLKIDVGEGVQLRVIHRGVGAITQNDVNLATVDSAIIIGFNVKPAERVAELADREGVDMRFYSVIYAAIDDIELALKGMLKPEYEEVQLGTAEIREIFRSSKFGNIAGSIVRSGLIRRNAKARVLRAGVLIGDNLTVDSLKRVKDDATEVREGFECGIGLGSFNDLQLEDIIETFEMREKPRV.

The interval 68–357 is disordered; sequence APEAAAPKAP…GVSVPRGDGN (290 aa). Composition is skewed to low complexity over residues 86-123, 141-156, 164-175, and 212-235; these read AKPA…APAV, PGNN…PRAG, PAAAPASGAGRP, and GPRP…RPAA. Gly residues-rich tracts occupy residues 236-257 and 276-324; these read GSGG…GGGN and RGAG…GAGR. The segment covering 325–334 has biased composition (basic residues); that stretch reads GKQRKSKRAK. Residues 449–620 form the tr-type G domain; it reads ARPPVVTVMG…AVMLTADAAL (172 aa). A G1 region spans residues 458–465; the sequence is GHVDHGKT. 458-465 provides a ligand contact to GTP; the sequence is GHVDHGKT. The segment at 483–487 is G2; it reads GITQH. The tract at residues 508–511 is G3; it reads DTPG. GTP contacts are provided by residues 508–512 and 562–565; these read DTPGH and NKID. The tract at residues 562-565 is G4; sequence NKID. The segment at 598 to 600 is G5; that stretch reads SAR.

This sequence belongs to the TRAFAC class translation factor GTPase superfamily. Classic translation factor GTPase family. IF-2 subfamily.

The protein localises to the cytoplasm. In terms of biological role, one of the essential components for the initiation of protein synthesis. Protects formylmethionyl-tRNA from spontaneous hydrolysis and promotes its binding to the 30S ribosomal subunits. Also involved in the hydrolysis of GTP during the formation of the 70S ribosomal complex. The protein is Translation initiation factor IF-2 of Renibacterium salmoninarum (strain ATCC 33209 / DSM 20767 / JCM 11484 / NBRC 15589 / NCIMB 2235).